We begin with the raw amino-acid sequence, 1213 residues long: DNA-directed RNA polymerase subunit beta' (1213 aa).

Zn(2+)-binding residues include cysteine 60, cysteine 62, cysteine 75, and cysteine 78. Aspartate 450, aspartate 452, and aspartate 454 together coordinate Mg(2+). Residues cysteine 819, cysteine 893, cysteine 900, and cysteine 903 each contribute to the Zn(2+) site.

This sequence belongs to the RNA polymerase beta' chain family. The RNAP catalytic core consists of 2 alpha, 1 beta, 1 beta' and 1 omega subunit. When a sigma factor is associated with the core the holoenzyme is formed, which can initiate transcription. Mg(2+) serves as cofactor. It depends on Zn(2+) as a cofactor.

It carries out the reaction RNA(n) + a ribonucleoside 5'-triphosphate = RNA(n+1) + diphosphate. Functionally, DNA-dependent RNA polymerase catalyzes the transcription of DNA into RNA using the four ribonucleoside triphosphates as substrates. This chain is DNA-directed RNA polymerase subunit beta', found in Streptococcus pyogenes serotype M1.